Here is a 355-residue protein sequence, read N- to C-terminus: Glutamyl aminopeptidase (355 aa).

A divalent metal cation is bound by residues histidine 65 and aspartate 181. Catalysis depends on glutamate 213, which acts as the Proton acceptor. A divalent metal cation-binding residues include glutamate 214, aspartate 236, and histidine 319.

The protein belongs to the peptidase M42 family. A divalent metal cation serves as cofactor.

The enzyme catalyses Release of N-terminal glutamate (and to a lesser extent aspartate) from a peptide.. In Lactococcus lactis subsp. cremoris (strain MG1363), this protein is Glutamyl aminopeptidase (pepA).